The following is a 112-amino-acid chain: Large ribosomal subunit protein eL22 (112 aa).

This sequence belongs to the eukaryotic ribosomal protein eL22 family. In terms of assembly, component of the large ribosomal subunit.

It localises to the cytoplasm. This is Large ribosomal subunit protein eL22 (RPL22) from Encephalitozoon cuniculi (strain GB-M1) (Microsporidian parasite).